Reading from the N-terminus, the 129-residue chain is Large ribosomal subunit protein bL12c (129 aa).

Belongs to the bacterial ribosomal protein bL12 family. As to quaternary structure, homodimer. Part of the ribosomal stalk of the 50S ribosomal subunit. Forms a multimeric L10(L12)X complex, where L10 forms an elongated spine to which 2 to 4 L12 dimers bind in a sequential fashion. Binds GTP-bound translation factors.

The protein resides in the plastid. The protein localises to the chloroplast. Its function is as follows. Forms part of the ribosomal stalk which helps the ribosome interact with GTP-bound translation factors. Is thus essential for accurate translation. The protein is Large ribosomal subunit protein bL12c of Pyropia yezoensis (Susabi-nori).